The following is a 1860-amino-acid chain: Collagen alpha-1(XXVII) chain (1860 aa).

The signal sequence occupies residues 1–41 (MGAGSARGARGTAAAAAARGGGFLFSWILVSFACHLASTQG). Positions 42–624 (APEDVDILQR…AGSTPFPLLM (583 aa)) are cleaved as a propeptide — N-terminal propeptide. The region spanning 71–236 (QSGFIFTQRA…NYCTHLRKQC (166 aa)) is the Laminin G-like domain. A glycan (N-linked (GlcNAc...) asparagine) is linked at asparagine 271. Disordered stretches follow at residues 278–608 (ALGS…TSSG), 625–772 (GPPG…GSDG), and 851–1625 (LKGD…IQLQ). 2 stretches are compositionally biased toward polar residues: residues 298–309 (TKPQRTSPTNPH) and 386–409 (HPTQ…QVPP). Residues 432-445 (MPRPPPPSTRPLPP) are compositionally biased toward pro residues. 2 stretches are compositionally biased toward low complexity: residues 446–457 (TTSSSKKPIPTL) and 485–505 (TALS…RPPA). Over residues 509 to 518 (PPTSGTSTPR) the composition is skewed to polar residues. Composition is skewed to low complexity over residues 572 to 588 (TTRP…QTTP) and 599 to 608 (SSSPRPTSSG). 16 consecutive Collagen-like domains span residues 625-679 (GPPG…GDPG), 688-747 (GAKG…PGPV), 748-807 (GDPG…DGNP), 808-867 (GELG…SGDP), 871-930 (GDKG…KGKP), 931-990 (GARG…PGPV), 1003-1062 (GEPG…RGAK), 1066-1125 (GPRG…PGTK), 1126-1185 (GLPG…IGQR), 1192-1251 (GDSG…QGEK), 1258-1317 (GAKG…KGIV), 1318-1378 (GPLG…RGKP), 1382-1441 (GQPG…EGIA), 1442-1501 (GPDG…PGQL), 1502-1561 (GPPG…QGPR), and 1562-1621 (GPPG…PGGP). The interval 625-1618 (GPPGPKGDCG…RGRPGPPGPP (994 aa)) is triple-helical region. Positions 654 to 669 (RGPPGPYGNPGLPGPP) are enriched in pro residues. Over residues 714-734 (PGPAGHPGEQGQPGPEGSPGA) the composition is skewed to low complexity. Composition is skewed to low complexity over residues 911–924 (FPGD…NGPE) and 932–944 (ARGL…QLGP). Gly residues predominate over residues 1033–1042 (GMPGGMGTPG). A compositionally biased stretch (pro residues) spans 1043–1053 (EPGPQGPPGSR). Positions 1130-1142 (EPGPQGPQGPIGP) are enriched in pro residues. Basic and acidic residues-rich tracts occupy residues 1202–1220 (LKGD…EKGQ) and 1241–1253 (PEGK…EKGR). 2 stretches are compositionally biased toward basic and acidic residues: residues 1326–1338 (KGEK…DGKA) and 1350–1360 (PVGDRGDRGEP). Residues 1449–1458 (RDGQAGQQGE) are compositionally biased toward low complexity. The span at 1572 to 1587 (IVGPLGILGPSGLPGP) shows a compositional bias: low complexity. Over residues 1603 to 1620 (RGPPGPRGRPGPPGPPGG) the composition is skewed to pro residues. Residues 1622-1860 (IQLQQDDLGA…RLEVGPACFL (239 aa)) constitute a propeptide, C-terminal propeptide. The 201-residue stretch at 1660 to 1860 (GEIFKTLHYL…RLEVGPACFL (201 aa)) folds into the Fibrillar collagen NC1 domain. 3 cysteine pairs are disulfide-bonded: cysteine 1690-cysteine 1722, cysteine 1731-cysteine 1858, and cysteine 1767-cysteine 1811. Residues aspartate 1708, asparagine 1710, cysteine 1713, and aspartate 1716 each contribute to the Ca(2+) site. Residue asparagine 1769 is glycosylated (N-linked (GlcNAc...) asparagine).

The protein belongs to the fibrillar collagen family.

It is found in the secreted. It localises to the extracellular space. The protein localises to the extracellular matrix. Functionally, plays a role during the calcification of cartilage and the transition of cartilage to bone. This Homo sapiens (Human) protein is Collagen alpha-1(XXVII) chain (COL27A1).